The chain runs to 478 residues: Pyruvate kinase (478 aa).

R35 lines the substrate pocket. K(+) is bound by residues N37, S39, and D69. An ATP-binding site is contributed by 37 to 40 (NMSH). R76 and K157 together coordinate ATP. Mg(2+) is bound at residue E219. Positions 242, 243, and 275 each coordinate substrate. Residue D243 participates in Mg(2+) binding.

The protein belongs to the pyruvate kinase family. In terms of assembly, homotetramer. It depends on Mg(2+) as a cofactor. Requires K(+) as cofactor.

The catalysed reaction is pyruvate + ATP = phosphoenolpyruvate + ADP + H(+). It functions in the pathway carbohydrate degradation; glycolysis; pyruvate from D-glyceraldehyde 3-phosphate: step 5/5. This chain is Pyruvate kinase (pyk), found in Methylorubrum extorquens (strain ATCC 14718 / DSM 1338 / JCM 2805 / NCIMB 9133 / AM1) (Methylobacterium extorquens).